A 151-amino-acid polypeptide reads, in one-letter code: Deoxyuridine 5'-triphosphate nucleotidohydrolase (151 aa).

Residues 70-72, Asn83, and 87-89 each bind substrate; these read RSG and VID.

It belongs to the dUTPase family. It depends on Mg(2+) as a cofactor.

The enzyme catalyses dUTP + H2O = dUMP + diphosphate + H(+). Its pathway is pyrimidine metabolism; dUMP biosynthesis; dUMP from dCTP (dUTP route): step 2/2. In terms of biological role, this enzyme is involved in nucleotide metabolism: it produces dUMP, the immediate precursor of thymidine nucleotides and it decreases the intracellular concentration of dUTP so that uracil cannot be incorporated into DNA. This chain is Deoxyuridine 5'-triphosphate nucleotidohydrolase, found in Desulfitobacterium hafniense (strain DSM 10664 / DCB-2).